The following is a 351-amino-acid chain: tRNA N6-adenosine threonylcarbamoyltransferase (351 aa).

Fe cation-binding residues include His-111 and His-115. Substrate is bound by residues 134–138 (LVSGG), Asp-167, Gly-180, and Asn-276. Asp-304 lines the Fe cation pocket.

Belongs to the KAE1 / TsaD family. Fe(2+) is required as a cofactor.

The protein localises to the cytoplasm. It carries out the reaction L-threonylcarbamoyladenylate + adenosine(37) in tRNA = N(6)-L-threonylcarbamoyladenosine(37) in tRNA + AMP + H(+). In terms of biological role, required for the formation of a threonylcarbamoyl group on adenosine at position 37 (t(6)A37) in tRNAs that read codons beginning with adenine. Is involved in the transfer of the threonylcarbamoyl moiety of threonylcarbamoyl-AMP (TC-AMP) to the N6 group of A37, together with TsaE and TsaB. TsaD likely plays a direct catalytic role in this reaction. The polypeptide is tRNA N6-adenosine threonylcarbamoyltransferase (Marinobacter nauticus (strain ATCC 700491 / DSM 11845 / VT8) (Marinobacter aquaeolei)).